The primary structure comprises 140 residues: Nucleoside diphosphate kinase (140 aa).

ATP contacts are provided by Lys-11, Phe-59, Arg-87, Thr-93, Arg-104, and Asn-114. The Pros-phosphohistidine intermediate role is filled by His-117.

The protein belongs to the NDK family. In terms of assembly, homotetramer. The cofactor is Mg(2+).

The protein localises to the cytoplasm. It catalyses the reaction a 2'-deoxyribonucleoside 5'-diphosphate + ATP = a 2'-deoxyribonucleoside 5'-triphosphate + ADP. The enzyme catalyses a ribonucleoside 5'-diphosphate + ATP = a ribonucleoside 5'-triphosphate + ADP. In terms of biological role, major role in the synthesis of nucleoside triphosphates other than ATP. The ATP gamma phosphate is transferred to the NDP beta phosphate via a ping-pong mechanism, using a phosphorylated active-site intermediate. The protein is Nucleoside diphosphate kinase of Rickettsia prowazekii (strain Madrid E).